The following is a 284-amino-acid chain: Efem/EfeO family lipoprotein (284 aa).

The N-terminal stretch at 1 to 17 is a signal peptide; sequence MKKLTTLLLASTLLIAA. Residue cysteine 18 is the site of N-palmitoyl cysteine attachment. Cysteine 18 carries the S-diacylglycerol cysteine lipid modification.

The protein belongs to the EfeM/EfeO family.

It is found in the cell membrane. This is Efem/EfeO family lipoprotein from Staphylococcus aureus (strain MRSA252).